The sequence spans 520 residues: Putative cytochrome P450 CYP13A4 (520 aa).

Residue Cys464 participates in heme binding.

It belongs to the cytochrome P450 family. It depends on heme as a cofactor.

In terms of biological role, cytochromes P450 are a group of heme-thiolate monooxygenases. They oxidize a variety of structurally unrelated compounds, including steroids, fatty acids, and xenobiotics. The protein is Putative cytochrome P450 CYP13A4 (cyp-13A4) of Caenorhabditis elegans.